The chain runs to 545 residues: Glucose-6-phosphate isomerase (545 aa).

Residue Glu-351 is the Proton donor of the active site. Catalysis depends on residues His-382 and Lys-510.

The protein belongs to the GPI family.

Its subcellular location is the cytoplasm. The enzyme catalyses alpha-D-glucose 6-phosphate = beta-D-fructose 6-phosphate. Its pathway is carbohydrate biosynthesis; gluconeogenesis. The protein operates within carbohydrate degradation; glycolysis; D-glyceraldehyde 3-phosphate and glycerone phosphate from D-glucose: step 2/4. Functionally, catalyzes the reversible isomerization of glucose-6-phosphate to fructose-6-phosphate. This chain is Glucose-6-phosphate isomerase, found in Helicobacter pylori (strain ATCC 700392 / 26695) (Campylobacter pylori).